Consider the following 171-residue polypeptide: Glutamyl-tRNA(Gln) amidotransferase subunit F, mitochondrial (171 aa).

It belongs to the GatF family. In terms of assembly, subunit of the heterotrimeric GatFAB amidotransferase (AdT) complex, composed of A, B and F subunits.

Its subcellular location is the mitochondrion inner membrane. The enzyme catalyses L-glutamyl-tRNA(Gln) + L-glutamine + ATP + H2O = L-glutaminyl-tRNA(Gln) + L-glutamate + ADP + phosphate + H(+). Its function is as follows. Allows the formation of correctly charged Gln-tRNA(Gln) through the transamidation of misacylated Glu-tRNA(Gln) in the mitochondria. The reaction takes place in the presence of glutamine and ATP through an activated gamma-phospho-Glu-tRNA(Gln). Required for proper protein synthesis within the mitochondrion. The protein is Glutamyl-tRNA(Gln) amidotransferase subunit F, mitochondrial of Zygosaccharomyces rouxii (strain ATCC 2623 / CBS 732 / NBRC 1130 / NCYC 568 / NRRL Y-229).